A 463-amino-acid chain; its full sequence is Exodeoxyribonuclease 7 large subunit (463 aa).

The protein belongs to the XseA family. As to quaternary structure, heterooligomer composed of large and small subunits.

It localises to the cytoplasm. The catalysed reaction is Exonucleolytic cleavage in either 5'- to 3'- or 3'- to 5'-direction to yield nucleoside 5'-phosphates.. In terms of biological role, bidirectionally degrades single-stranded DNA into large acid-insoluble oligonucleotides, which are then degraded further into small acid-soluble oligonucleotides. This Klebsiella pneumoniae subsp. pneumoniae (strain ATCC 700721 / MGH 78578) protein is Exodeoxyribonuclease 7 large subunit.